Here is a 273-residue protein sequence, read N- to C-terminus: NAD-dependent protein deacylase (273 aa).

In terms of domain architecture, Deacetylase sirtuin-type spans 20-272 (RERLRQRIFF…PEFVEKLLKG (253 aa)). 48-67 (GAGISAESGIRTFRAADGLW) contacts NAD(+). 2 residues coordinate substrate: Tyr-92 and Arg-95. 129 to 132 (QNID) lines the NAD(+) pocket. His-147 serves as the catalytic Proton acceptor. Cys-155 and Cys-174 together coordinate Zn(2+). NAD(+) contacts are provided by residues 214–216 (GTS), 240–242 (NLE), and Ala-258.

Belongs to the sirtuin family. Class III subfamily. Requires Zn(2+) as cofactor.

The protein resides in the cytoplasm. It carries out the reaction N(6)-acetyl-L-lysyl-[protein] + NAD(+) + H2O = 2''-O-acetyl-ADP-D-ribose + nicotinamide + L-lysyl-[protein]. The enzyme catalyses N(6)-succinyl-L-lysyl-[protein] + NAD(+) + H2O = 2''-O-succinyl-ADP-D-ribose + nicotinamide + L-lysyl-[protein]. The catalysed reaction is N(6)-(2-hydroxyisobutanoyl)-L-lysyl-[protein] + NAD(+) + H2O = 2''-O-(2-hydroxyisobutanoyl)-ADP-D-ribose + nicotinamide + L-lysyl-[protein]. NAD-dependent lysine deacetylase that specifically removes acetyl groups on target proteins. Also acts as a protein-lysine deacylase by mediating protein desuccinylation and de-2-hydroxyisobutyrylation. Modulates the activities of several proteins which are inactive in their acylated form. The sequence is that of NAD-dependent protein deacylase from Escherichia coli O157:H7.